Consider the following 66-residue polypeptide: Putative ankyrin repeat protein RF_pd14 (66 aa).

Residues lysine 14–isoleucine 66 form an ANK repeat.

This Rickettsia felis (strain ATCC VR-1525 / URRWXCal2) (Rickettsia azadi) protein is Putative ankyrin repeat protein RF_pd14.